We begin with the raw amino-acid sequence, 59 residues long: Conotoxin ViVB (59 aa).

Residues 1-22 (MRCVPVFIILLLLIPSAPSAAV) form the signal peptide. The propeptide occupies 23–46 (QPKTEKDDVPLASFHDSAMRILSR). Pyrrolidone carboxylic acid is present on Q47. Residue V58 is modified to Valine amide.

Contains 2 disulfide bonds that can be either 'C1-C3, C2-C4' or 'C1-C4, C2-C3', since these disulfide connectivities have been observed for conotoxins with cysteine framework V (for examples, see AC P0DQQ7 and AC P81755). Expressed by the venom duct.

It is found in the secreted. In Conus virgo (Virgin cone), this protein is Conotoxin ViVB.